The primary structure comprises 60 residues: Large ribosomal subunit protein bL33 (60 aa).

The protein belongs to the bacterial ribosomal protein bL33 family.

In Flavobacterium johnsoniae (strain ATCC 17061 / DSM 2064 / JCM 8514 / BCRC 14874 / CCUG 350202 / NBRC 14942 / NCIMB 11054 / UW101) (Cytophaga johnsonae), this protein is Large ribosomal subunit protein bL33.